A 147-amino-acid chain; its full sequence is Lysozyme C-2 (147 aa).

Positions 1–18 (MKALVILGFLFLSVAVQG) are cleaved as a signal peptide. The region spanning 19-147 (KVFERCELAR…VSSYVEGCTL (129 aa)) is the C-type lysozyme domain. 4 cysteine pairs are disulfide-bonded: Cys-24-Cys-145, Cys-48-Cys-133, Cys-83-Cys-99, and Cys-95-Cys-113. Residues Glu-53 and Asp-71 contribute to the active site.

Belongs to the glycosyl hydrolase 22 family. In terms of assembly, monomer. In terms of tissue distribution, stomach-specific.

The catalysed reaction is Hydrolysis of (1-&gt;4)-beta-linkages between N-acetylmuramic acid and N-acetyl-D-glucosamine residues in a peptidoglycan and between N-acetyl-D-glucosamine residues in chitodextrins.. In terms of biological role, lysozymes have primarily a bacteriolytic function; those in tissues and body fluids are associated with the monocyte-macrophage system and enhance the activity of immunoagents. This Bos taurus (Bovine) protein is Lysozyme C-2 (LYZ2).